The chain runs to 464 residues: Molybdate transporter 2 (464 aa).

Positions 8-9 (LL) match the Tonoplast targeting signal motif. 9 helical membrane passes run 33-53 (LSGA…LTLV), 62-82 (LIFT…PMPV), 116-136 (LLLG…LPVV), 172-192 (IWLG…IILS), 223-243 (LLSS…LCFI), 309-329 (VSIS…MPVC), 348-368 (SVIF…NSFV), 374-394 (FPIG…AMAS), and 404-424 (FIML…LGFG).

This sequence belongs to the SLC26A/SulP transporter (TC 2.A.53) family. Expressed in leaves. Not detected in roots, shoots and seeds.

Its subcellular location is the vacuole membrane. Its function is as follows. Molybdate transporter required for vacuolar molybdate export during senescence. In Arabidopsis thaliana (Mouse-ear cress), this protein is Molybdate transporter 2 (MOT2).